Reading from the N-terminus, the 212-residue chain is uncharacterized protein (212 aa).

The first 21 residues, 1-21 (MRRLTAFGLALLLLASGVARG), serve as a signal peptide directing secretion.

This sequence to E.coli YfaT and T.maritima TM0986.

This is an uncharacterized protein from Pseudomonas aeruginosa (strain ATCC 15692 / DSM 22644 / CIP 104116 / JCM 14847 / LMG 12228 / 1C / PRS 101 / PAO1).